Consider the following 258-residue polypeptide: Imidazole glycerol phosphate synthase subunit HisF (258 aa).

Catalysis depends on residues Asp11 and Asp130.

This sequence belongs to the HisA/HisF family. As to quaternary structure, heterodimer of HisH and HisF.

The protein resides in the cytoplasm. It catalyses the reaction 5-[(5-phospho-1-deoxy-D-ribulos-1-ylimino)methylamino]-1-(5-phospho-beta-D-ribosyl)imidazole-4-carboxamide + L-glutamine = D-erythro-1-(imidazol-4-yl)glycerol 3-phosphate + 5-amino-1-(5-phospho-beta-D-ribosyl)imidazole-4-carboxamide + L-glutamate + H(+). Its pathway is amino-acid biosynthesis; L-histidine biosynthesis; L-histidine from 5-phospho-alpha-D-ribose 1-diphosphate: step 5/9. Its function is as follows. IGPS catalyzes the conversion of PRFAR and glutamine to IGP, AICAR and glutamate. The HisF subunit catalyzes the cyclization activity that produces IGP and AICAR from PRFAR using the ammonia provided by the HisH subunit. The polypeptide is Imidazole glycerol phosphate synthase subunit HisF (Stenotrophomonas maltophilia (strain R551-3)).